The following is a 592-amino-acid chain: Bifunctional purine biosynthesis protein ATIC (592 aa).

Methionine 1 bears the N-acetylmethionine mark. The 145-residue stretch at 2–146 (APGQLALFSV…KNHARVTVVC (145 aa)) folds into the MGS-like domain. The interval 2–198 (APGQLALFSV…ISDYFRKQYS (197 aa)) is IMP cyclohydrolase. IMP-binding positions include 12-14 (SDK), 34-37 (SGGT), 64-67 (RVKT), 101-102 (CN), and 125-126 (DI). Lysine 137 serves as the catalytic Proton donor/acceptor; for FAICAR cyclization activity. Lysine 199 carries the N6-acetyllysine modification. The tract at residues 199 to 592 (KGVSQMPLRY…AHTNLRLFHH (394 aa)) is AICAR formyltransferase. 5-amino-1-(5-phospho-beta-D-ribosyl)imidazole-4-carboxamide contacts are provided by residues 207–208 (RY), histidine 267, glycine 316, aspartate 339, asparagine 431, and arginine 451. The active-site Proton acceptor; for AICAR formyltransferase activity is the histidine 267. Isoleucine 452 contributes to the (6R)-10-formyltetrahydrofolate binding site. 5-amino-1-(5-phospho-beta-D-ribosyl)imidazole-4-carboxamide is bound at residue phenylalanine 541. (6R)-10-formyltetrahydrofolate-binding positions include aspartate 546 and 565 to 566 (SA). Arginine 588 provides a ligand contact to 5-amino-1-(5-phospho-beta-D-ribosyl)imidazole-4-carboxamide.

It belongs to the PurH family. In terms of assembly, homodimer. Associates with internalized INSR complexes on Golgi/endosomal membranes. Interacts with INSR; ATIC together with PRKAA2/AMPK2 and HACD3/PTPLAD1 is proposed to be part of a signaling network regulating INSR autophosphorylation and endocytosis. In terms of tissue distribution, present in the heart, brain, placenta, lung, liver, skeletal muscle, kidney, pancreas.

It localises to the cytoplasm. Its subcellular location is the cytosol. It carries out the reaction (6R)-10-formyltetrahydrofolate + 5-amino-1-(5-phospho-beta-D-ribosyl)imidazole-4-carboxamide = 5-formamido-1-(5-phospho-D-ribosyl)imidazole-4-carboxamide + (6S)-5,6,7,8-tetrahydrofolate. It catalyses the reaction 10-formyldihydrofolate + 5-amino-1-(5-phospho-beta-D-ribosyl)imidazole-4-carboxamide = 5-formamido-1-(5-phospho-D-ribosyl)imidazole-4-carboxamide + 7,8-dihydrofolate. The catalysed reaction is IMP + H2O = 5-formamido-1-(5-phospho-D-ribosyl)imidazole-4-carboxamide. The enzyme catalyses 5-amino-1-(5-phospho-D-ribosyl)imidazole-4-thiocarboxamide + 10-formyldihydrofolate = 6-thio-IMP + 7,8-dihydrofolate + H2O. It participates in purine metabolism; IMP biosynthesis via de novo pathway; 5-formamido-1-(5-phospho-D-ribosyl)imidazole-4-carboxamide from 5-amino-1-(5-phospho-D-ribosyl)imidazole-4-carboxamide (10-formyl THF route): step 1/1. The protein operates within purine metabolism; IMP biosynthesis via de novo pathway; IMP from 5-formamido-1-(5-phospho-D-ribosyl)imidazole-4-carboxamide: step 1/1. Its activity is regulated as follows. AMP and XMP inhibit AICAR formyltransferase activity. AICAR formyltransferase activity is inhibited by N-(6-fluoro-1-oxo-1,2-dihydroisoquinolin-7-yl)-5- [(3R)-3-hydroxypyrrolidin-1-yl]thiophene-2-sulfonamide (LSN 3213128), which acts as a tumor suppression in cancer cell lines. Bifunctional enzyme that catalyzes the last two steps of purine biosynthesis. Acts as a transformylase that incorporates a formyl group to the AMP analog AICAR (5-amino-1-(5-phospho-beta-D-ribosyl)imidazole-4-carboxamide) to produce the intermediate formyl-AICAR (FAICAR). Can use both 10-formyldihydrofolate and 10-formyltetrahydrofolate as the formyl donor in this reaction. Also catalyzes the cyclization of FAICAR to inosine monophosphate (IMP). Is able to convert thio-AICAR to 6-mercaptopurine ribonucleotide, an inhibitor of purine biosynthesis used in the treatment of human leukemias. Promotes insulin receptor/INSR autophosphorylation and is involved in INSR internalization. This is Bifunctional purine biosynthesis protein ATIC from Homo sapiens (Human).